A 501-amino-acid polypeptide reads, in one-letter code: Cytochrome P450 2J5 (501 aa).

Cysteine 447 contributes to the heme binding site.

The protein belongs to the cytochrome P450 family. The cofactor is heme.

The protein localises to the endoplasmic reticulum membrane. Its subcellular location is the microsome membrane. The catalysed reaction is an organic molecule + reduced [NADPH--hemoprotein reductase] + O2 = an alcohol + oxidized [NADPH--hemoprotein reductase] + H2O + H(+). In Mus musculus (Mouse), this protein is Cytochrome P450 2J5 (Cyp2j5).